An 851-amino-acid chain; its full sequence is Probable alpha,alpha-trehalose-phosphate synthase [UDP-forming] 7 (851 aa).

Ser-5 is modified (phosphoserine). Thr-32 is subject to Phosphothreonine. The tract at residues 59–540 (DRMIIVANRL…SRSFLQDLER (482 aa)) is glycosyltransferase.

This sequence in the N-terminal section; belongs to the glycosyltransferase 20 family. The protein in the C-terminal section; belongs to the trehalose phosphatase family. As to quaternary structure, binds to the phosphopeptide-binding site of GRF/14-3-3. In terms of processing, phosphorylated. Expressed in seedlings, leaves, roots, stems, flowers and siliques.

It catalyses the reaction D-glucose 6-phosphate + UDP-alpha-D-glucose = alpha,alpha-trehalose 6-phosphate + UDP + H(+). This is Probable alpha,alpha-trehalose-phosphate synthase [UDP-forming] 7 (TPS7) from Arabidopsis thaliana (Mouse-ear cress).